The sequence spans 310 residues: Malate dehydrogenase (310 aa).

Residues 7 to 12 (GAGNVG) and aspartate 32 contribute to the NAD(+) site. Arginine 81 and arginine 87 together coordinate substrate. NAD(+) contacts are provided by residues asparagine 94 and 117-119 (VSN). Positions 119 and 150 each coordinate substrate. The active-site Proton acceptor is the histidine 174.

The protein belongs to the LDH/MDH superfamily. MDH type 3 family.

It catalyses the reaction (S)-malate + NAD(+) = oxaloacetate + NADH + H(+). In terms of biological role, catalyzes the reversible oxidation of malate to oxaloacetate. The polypeptide is Malate dehydrogenase (Pelodictyon phaeoclathratiforme (strain DSM 5477 / BU-1)).